The chain runs to 525 residues: Probable protein kinase UbiB (525 aa).

The Protein kinase domain maps to 118-500 (DFERVPVASA…QKRTNRLLQG (383 aa)). Residues 124–132 (VASASIAQV) and Lys-150 each bind ATP. The active-site Proton acceptor is Asp-285. Residues 501 to 521 (LLLFGVAVGVGAVLARAFLAL) form a helical membrane-spanning segment.

Belongs to the ABC1 family. UbiB subfamily.

Its subcellular location is the cell inner membrane. It participates in cofactor biosynthesis; ubiquinone biosynthesis [regulation]. In terms of biological role, is probably a protein kinase regulator of UbiI activity which is involved in aerobic coenzyme Q (ubiquinone) biosynthesis. The polypeptide is Probable protein kinase UbiB (Paraburkholderia phytofirmans (strain DSM 17436 / LMG 22146 / PsJN) (Burkholderia phytofirmans)).